The chain runs to 55 residues: Large ribosomal subunit protein bL33 (55 aa).

This sequence belongs to the bacterial ribosomal protein bL33 family.

The chain is Large ribosomal subunit protein bL33 from Bradyrhizobium sp. (strain BTAi1 / ATCC BAA-1182).